Reading from the N-terminus, the 436-residue chain is MADYLGKKVVIIGLGLTGLSCVDFFMARGVIPRVMDTRTAPPGKDKLPDGVECHSGSLNADWLMDADLIVVSPGIALATAVLQAAANAGIEIVGDIELFCREATAPIVAITGSNGKSTVTSLVGEMAKAANWQVGVGGNIGLPALELLKKSCQLYVLELSSFQLETTYSLNATAAAVLNVTEDHMDRYPQGVSQYRAAKLRIYHQAKRCIVNAQDPLTLPEMGMDSRCVSFGVDCGDYQLDSENAFLKVHNQSLLATNEIKLTGRHNYANGLVALALADAVGIPREASLATLTVYPGLDHRFQLARLNKGVRWINDSKATNVGSTMAALDGLNLEGTLYLLLGGDGKSADFSPLKPFLCGNKVQLYCFGRDGKQLAQLRPEIATLTETMEQAIRDIAPRLVAGDMVLLSPACASLDQFRNFEQRGHEFTRLAEELG.

112 to 118 (GSNGKST) is a binding site for ATP.

The protein belongs to the MurCDEF family.

Its subcellular location is the cytoplasm. The enzyme catalyses UDP-N-acetyl-alpha-D-muramoyl-L-alanine + D-glutamate + ATP = UDP-N-acetyl-alpha-D-muramoyl-L-alanyl-D-glutamate + ADP + phosphate + H(+). The protein operates within cell wall biogenesis; peptidoglycan biosynthesis. Functionally, cell wall formation. Catalyzes the addition of glutamate to the nucleotide precursor UDP-N-acetylmuramoyl-L-alanine (UMA). The protein is UDP-N-acetylmuramoylalanine--D-glutamate ligase of Photorhabdus laumondii subsp. laumondii (strain DSM 15139 / CIP 105565 / TT01) (Photorhabdus luminescens subsp. laumondii).